A 164-amino-acid chain; its full sequence is UPF0304 protein MS2240 (164 aa).

It belongs to the UPF0304 family.

This is UPF0304 protein MS2240 from Mannheimia succiniciproducens (strain KCTC 0769BP / MBEL55E).